Reading from the N-terminus, the 62-residue chain is Photosystem II reaction center protein Z (62 aa).

A run of 2 helical transmembrane segments spans residues 8–28 (AVFALIATSSILLIGVPVVFA) and 41–61 (FSGTSLWIGLVFLVGILNSLI).

The protein belongs to the PsbZ family. As to quaternary structure, PSII is composed of 1 copy each of membrane proteins PsbA, PsbB, PsbC, PsbD, PsbE, PsbF, PsbH, PsbI, PsbJ, PsbK, PsbL, PsbM, PsbT, PsbY, PsbZ, Psb30/Ycf12, at least 3 peripheral proteins of the oxygen-evolving complex and a large number of cofactors. It forms dimeric complexes.

It is found in the plastid. It localises to the chloroplast thylakoid membrane. Functionally, may control the interaction of photosystem II (PSII) cores with the light-harvesting antenna, regulates electron flow through the 2 photosystem reaction centers. PSII is a light-driven water plastoquinone oxidoreductase, using light energy to abstract electrons from H(2)O, generating a proton gradient subsequently used for ATP formation. This Daucus carota (Wild carrot) protein is Photosystem II reaction center protein Z.